An 81-amino-acid polypeptide reads, in one-letter code: Sulfur carrier protein TusA (81 aa).

Cysteine 19 serves as the catalytic Cysteine persulfide intermediate.

Belongs to the sulfur carrier protein TusA family.

The protein localises to the cytoplasm. In terms of biological role, sulfur carrier protein which probably makes part of a sulfur-relay system. This Shewanella sp. (strain ANA-3) protein is Sulfur carrier protein TusA.